The sequence spans 837 residues: Tuftelin-interacting protein 11 (837 aa).

Basic and acidic residues-rich tracts occupy residues 1–13 (MSLS…GEGH) and 44–64 (QTKE…EERP). Disordered stretches follow at residues 1 to 21 (MSLS…DDER), 34 to 73 (EFNP…RARD), and 85 to 135 (LKKG…FAGG). The segment at 1-50 (MSLSHLYRDGEGHLDDDDDERENFEITDWDLQNEFNPNRQRHWQTKEEAT) is required for interaction with DHX15. A phosphoserine mark is found at S2, S59, S95, and S98. The span at 91-100 (EEADSEDSDA) shows a compositional bias: acidic residues. Basic and acidic residues predominate over residues 101-116 (EEKPVKQEDFPKDLGP). At S144 the chain carries Phosphoserine. The 47-residue stretch at 149–195 (TKGIGQKLLQKMGYVPGRGLGKNAQGIINPIEAKQRKGKGAVGAYGS) folds into the G-patch domain. Residues 183 to 236 (QRKGKGAVGAYGSERTTQSLQDFPVADSEEEAEEEFQKELSQWRKDPSGSKKKP) form a disordered region. A Phosphoserine modification is found at S210. Residues 217–231 (EFQKELSQWRKDPSG) show a composition bias toward basic and acidic residues. The Nuclear localization signal signature appears at 700-705 (VKDKFN). The required for nuclear speckle localization stretch occupies residues 710–734 (IMNRAVSSNVGAYMQPGARENIAYL).

This sequence belongs to the TFP11/STIP family. Identified in the spliceosome C complex. Found in the Intron Large (IL) complex, a post-mRNA release spliceosomal complex containing the excised intron, U2, U5 and U6 snRNPs, and splicing factors. Interacts with TUFT1. Interacts with DHX15; indicative for a recruitment of DHX15 to the IL complex. Interacts with GCFC2.

It is found in the cytoplasm. Its subcellular location is the nucleus. Functionally, involved in pre-mRNA splicing, specifically in spliceosome disassembly during late-stage splicing events. Intron turnover seems to proceed through reactions in two lariat-intron associated complexes termed Intron Large (IL) and Intron Small (IS). In cooperation with DHX15 seems to mediate the transition of the U2, U5 and U6 snRNP-containing IL complex to the snRNP-free IS complex leading to efficient debranching and turnover of excised introns. May play a role in the differentiation of ameloblasts and odontoblasts or in the forming of the enamel extracellular matrix. This Rattus norvegicus (Rat) protein is Tuftelin-interacting protein 11 (Tfip11).